The primary structure comprises 357 residues: Aminotransferase TOXF (357 aa).

Residue Arg-87 participates in pyridoxal 5'-phosphate binding. Lys-188 bears the N6-(pyridoxal phosphate)lysine mark. Glu-227 provides a ligand contact to pyridoxal 5'-phosphate.

It belongs to the class-IV pyridoxal-phosphate-dependent aminotransferase family. The cofactor is pyridoxal 5'-phosphate.

Its pathway is mycotoxin biosynthesis; HC-toxin biosynthesis. Functionally, aminotransferase, part of the diffuse TOX2 gene cluster that mediates the biosynthesis of the HC-toxin, cyclic tetrapeptide of structure cyclo(D-Pro-L-Ala-D-Ala-L-Aeo), where Aeo stands for 2-amino-9,10-epoxi-8-oxodecanoic acid. HC-toxin is a determinant of specificity and virulence in the interaction between the producing fungus and its host, maize. TOXF contributes to the synthesis of 2-amino-9,10-epoxi-8-oxodecanoic acid, an essential precursor for the production of the major forms of HC-toxin by the non-ribosomal peptide synthetase HTS1. The polypeptide is Aminotransferase TOXF (TOXF) (Cochliobolus carbonum (Maize leaf spot fungus)).